We begin with the raw amino-acid sequence, 321 residues long: Ferrochelatase (321 aa).

Fe cation contacts are provided by His-194 and Glu-275.

It belongs to the ferrochelatase family.

The protein resides in the cytoplasm. It catalyses the reaction heme b + 2 H(+) = protoporphyrin IX + Fe(2+). It participates in porphyrin-containing compound metabolism; protoheme biosynthesis; protoheme from protoporphyrin-IX: step 1/1. Catalyzes the ferrous insertion into protoporphyrin IX. The chain is Ferrochelatase from Wigglesworthia glossinidia brevipalpis.